Consider the following 467-residue polypeptide: Acyl-CoA-binding domain-containing protein 5 (467 aa).

The ACB domain occupies His8 to Val97. Residues Ile19–Phe28, Tyr39–Lys43, Lys65, and Tyr84 contribute to the an acyl-CoA site. Disordered stretches follow at residues Lys119–Asn204, Thr219–Pro240, and Ile304–Pro376. Residues Gly125–Asn139 are compositionally biased toward polar residues. Over residues Asp170–Glu187 the composition is skewed to acidic residues. 2 stretches are compositionally biased toward basic and acidic residues: residues Glu312–Gln322 and Lys335–Leu347. A compositionally biased stretch (gly residues) spans Gly352–Ser372. Residues Glu382 to Ser411 adopt a coiled-coil conformation. The helical transmembrane segment at Gly439–Leu459 threads the bilayer.

The protein belongs to the ATG37 family.

Its subcellular location is the peroxisome membrane. Functionally, acyl-CoA binding protein which acts as the peroxisome receptor for pexophagy but is dispensable for aggrephagy and nonselective autophagy. Binds medium- and long-chain acyl-CoA esters. In Xenopus laevis (African clawed frog), this protein is Acyl-CoA-binding domain-containing protein 5 (acbd5).